Consider the following 46-residue polypeptide: Light-harvesting protein B800/850/890 alpha-1 chain (46 aa).

Over 1-12 the chain is Cytoplasmic; it reads MWRLWKLYDPRR. The helical transmembrane segment at 13 to 33 threads the bilayer; it reads VLIGIFSWLAVLALVIHFILL. His29 contributes to the a bacteriochlorophyll binding site. Topologically, residues 34 to 46 are periplasmic; sequence STDRFNWVGGAAN.

The protein belongs to the antenna complex alpha subunit family. As to quaternary structure, the core complex is formed by different alpha and beta chains, binding bacteriochlorophyll molecules, and arranged most probably in tetrameric structures disposed around the reaction center. The non-pigmented gamma chains may constitute additional components.

It is found in the cell inner membrane. Its function is as follows. Antenna complexes are light-harvesting systems, which transfer the excitation energy to the reaction centers. This Halorhodospira halophila (strain DSM 244 / SL1) (Ectothiorhodospira halophila (strain DSM 244 / SL1)) protein is Light-harvesting protein B800/850/890 alpha-1 chain.